Reading from the N-terminus, the 847-residue chain is DNA mismatch repair protein MutS (847 aa).

602 to 609 (GPNMSGKS) serves as a coordination point for ATP. A disordered region spans residues 788 to 807 (EKREASLPASRTDSQKVSEQ). A compositionally biased stretch (polar residues) spans 796–807 (ASRTDSQKVSEQ).

The protein belongs to the DNA mismatch repair MutS family.

In terms of biological role, this protein is involved in the repair of mismatches in DNA. It is possible that it carries out the mismatch recognition step. This protein has a weak ATPase activity. The sequence is that of DNA mismatch repair protein MutS from Streptococcus gordonii (strain Challis / ATCC 35105 / BCRC 15272 / CH1 / DL1 / V288).